The primary structure comprises 52 residues: Lantibiotic gallidermin (52 aa).

The propeptide occupies 1–30 (MEAVKEKNELFDLDVKVNAKESNDSGAEPR). Residues 33-37 (SKFLC) constitute a cross-link (lanthionine (Ser-Cys)). Positions 38-41 (TPGC) form a cross-link, beta-methyllanthionine (Thr-Cys). (Z)-2,3-didehydrobutyrine is present on Thr-44. The segment at residues 46-51 (SFNSYC) is a cross-link (lanthionine (Ser-Cys)). Residues 49–52 (SYCC) constitute a cross-link (S-(2-aminovinyl)-D-cysteine (Ser-Cys)).

The protein belongs to the type A lantibiotic family. Maturation of lantibiotics involves the enzymatic conversion of Thr, and Ser into dehydrated AA and the formation of thioether bonds with cysteine. The C-terminal lanthionine undergoes decarboxylation. This is followed by membrane translocation and cleavage of the modified precursor. In terms of processing, the structure of the 2,3-didehydrobutyrine is not discussed in PubMed:1932575. However, in Fig. 5 the NMR model appears to have the Z-isomer.

Functionally, lanthionine-containing peptide antibiotic (lantibiotic) active on Gram-positive bacteria. The bactericidal activity of lantibiotics is based on depolarization of energized bacterial cytoplasmic membranes, initiated by the formation of aqueous transmembrane pores. The chain is Lantibiotic gallidermin (gdmA) from Staphylococcus gallinarum.